Reading from the N-terminus, the 31-residue chain is Cytochrome b6-f complex subunit 6 (31 aa).

Residues 4–26 (LTSYFGFLLAALTITSALFIGLS) form a helical membrane-spanning segment.

The protein belongs to the PetL family. In terms of assembly, the 4 large subunits of the cytochrome b6-f complex are cytochrome b6, subunit IV (17 kDa polypeptide, PetD), cytochrome f and the Rieske protein, while the 4 small subunits are PetG, PetL, PetM and PetN. The complex functions as a dimer.

The protein localises to the plastid. Its subcellular location is the chloroplast thylakoid membrane. Its function is as follows. Component of the cytochrome b6-f complex, which mediates electron transfer between photosystem II (PSII) and photosystem I (PSI), cyclic electron flow around PSI, and state transitions. PetL is important for photoautotrophic growth as well as for electron transfer efficiency and stability of the cytochrome b6-f complex. This Aethionema grandiflorum (Persian stone-cress) protein is Cytochrome b6-f complex subunit 6.